The sequence spans 677 residues: Sulfate transporter 2.1 (677 aa).

The Cytoplasmic segment spans residues 1–118 (MKERDSESFE…NYKLTMFKND (118 aa)). The segment at 23 to 54 (STHMIQMAMANSGSSAAAQAGQDQPDRSKWLL) is disordered. Over residues 28 to 44 (QMAMANSGSSAAAQAGQ) the composition is skewed to low complexity. A helical transmembrane segment spans residues 119 to 139 (LMAGLTLASLCIPQSIGYATL). The Extracellular segment spans residues 140-141 (AK). A helical membrane pass occupies residues 142-162 (LDPQYGLYTSVVPPLIYALMG). Over 163 to 166 (TSRE) the chain is Cytoplasmic. A helical membrane pass occupies residues 167–187 (IAIGPVAVVSLLISSMLQKLI). Residues 188–198 (DPETDPLGYKK) lie on the Extracellular side of the membrane. Residues 199 to 219 (LVLTTTFFAGIFQASFGLFRL) form a helical membrane-spanning segment. The Cytoplasmic portion of the chain corresponds to 220–221 (GF). Residues 222–242 (LVDFLSHAAIVGFMGGAAIVI) traverse the membrane as a helical segment. At 243–278 (GLQQLKGLLGITNFTTNTDIVSVLRAVWRSCQQQWS) the chain is on the extracellular side. Residue Asn255 is glycosylated (N-linked (GlcNAc...) asparagine). A helical transmembrane segment spans residues 279 to 299 (PHTFILGCSFLSFILITRFIG). Residues 300 to 304 (KKYKK) lie on the Cytoplasmic side of the membrane. The helical transmembrane segment at 305 to 325 (LFWLPAIAPLIAVVVSTLMVF) threads the bilayer. The Extracellular segment spans residues 326 to 360 (LTKADEHGVKTVRHIKGGLNPMSIQDLDFNTPHLG). The chain crosses the membrane as a helical span at residues 361–381 (QIAKIGLIIAIVALTEAIAVG). Residues 382–397 (RSFAGIKGYRLDGNKE) are Cytoplasmic-facing. The helical transmembrane segment at 398–418 (MVAIGFMNVLGSFTSCYAATG) threads the bilayer. The Extracellular segment spans residues 419–426 (SFSRTAVN). Residues 427–447 (FAAGCETAMSNIVMAVTVFVA) traverse the membrane as a helical segment. Over 448 to 454 (LECLTRL) the chain is Cytoplasmic. Residues 455–475 (LYYTPIAILASIILSALPGLI) traverse the membrane as a helical segment. Over 476–490 (NINEAIHIWKVDKFD) the chain is Extracellular. The helical transmembrane segment at 491-511 (FLALIGAFFGVLFASVEIGLL) threads the bilayer. The Cytoplasmic portion of the chain corresponds to 512 to 677 (VAVVISFAKI…ALDACFGLKV (166 aa)). Residues 548 to 672 (YPMTVKTPGV…LTIGEALDAC (125 aa)) enclose the STAS domain.

It belongs to the SLC26A/SulP transporter (TC 2.A.53) family. Expressed in root cap, central cylinder of roots and in vascular tissues of leaves.

Its subcellular location is the membrane. Functionally, low-affinity H(+)/sulfate cotransporter that may be involved in root-to-shoot translocation of sulfate. Plays a central role in the regulation of sulfate assimilation. This Arabidopsis thaliana (Mouse-ear cress) protein is Sulfate transporter 2.1 (SULTR2;1).